Reading from the N-terminus, the 971-residue chain is uncharacterized protein (971 aa).

This is an uncharacterized protein from Caenorhabditis elegans.